A 437-amino-acid chain; its full sequence is Tol-Pal system protein TolB (437 aa).

The first 23 residues, 1–23 (MQKRHPIIYLLITLLIFVPVSYG), serve as a signal peptide directing secretion.

Belongs to the TolB family. In terms of assembly, the Tol-Pal system is composed of five core proteins: the inner membrane proteins TolA, TolQ and TolR, the periplasmic protein TolB and the outer membrane protein Pal. They form a network linking the inner and outer membranes and the peptidoglycan layer.

The protein localises to the periplasm. Its function is as follows. Part of the Tol-Pal system, which plays a role in outer membrane invagination during cell division and is important for maintaining outer membrane integrity. This chain is Tol-Pal system protein TolB, found in Coxiella burnetii (strain RSA 493 / Nine Mile phase I).